We begin with the raw amino-acid sequence, 206 residues long: Putative acetyltransferase OgpAT (206 aa).

Residues 5 to 205 (VVIRRATAAD…EVVVGRRLLD (201 aa)) form the N-acetyltransferase domain. Residues 135–138 (HIDL), 144–148 (GRGVG), 175–177 (NPR), and His184 contribute to the acetyl-CoA site.

Belongs to the acetyltransferase family. In terms of assembly, monomer.

Its function is as follows. Binds acetyl-CoA, but not butyryl-CoA or decanoyl-CoA. May have acetyltransferase activity. This chain is Putative acetyltransferase OgpAT, found in Oceanicola granulosus (strain ATCC BAA-861 / DSM 15982 / KCTC 12143 / HTCC2516).